A 178-amino-acid polypeptide reads, in one-letter code: Large ribosomal subunit protein uL6 (178 aa).

Belongs to the universal ribosomal protein uL6 family. As to quaternary structure, part of the 50S ribosomal subunit.

This protein binds to the 23S rRNA, and is important in its secondary structure. It is located near the subunit interface in the base of the L7/L12 stalk, and near the tRNA binding site of the peptidyltransferase center. The sequence is that of Large ribosomal subunit protein uL6 from Kocuria rhizophila (strain ATCC 9341 / DSM 348 / NBRC 103217 / DC2201).